A 429-amino-acid polypeptide reads, in one-letter code: Bifunctional protein GlmU (429 aa).

The pyrophosphorylase stretch occupies residues 1-223 (MKTSILILAA…EDEFMGINDK (223 aa)). UDP-N-acetyl-alpha-D-glucosamine-binding positions include 8 to 11 (LAAG), K22, and 81 to 82 (GT). Position 102 (D102) interacts with Mg(2+). The UDP-N-acetyl-alpha-D-glucosamine site is built by G135, E149, N164, and N221. N221 contacts Mg(2+). The interval 224–244 (FELSIAENFMQEKIKKYWMQQ) is linker. The N-acetyltransferase stretch occupies residues 245 to 429 (GVIFHLPQST…KDYYYKKFQK (185 aa)). 2 residues coordinate UDP-N-acetyl-alpha-D-glucosamine: R308 and K325. The active-site Proton acceptor is the H336. Residues Y339 and N350 each contribute to the UDP-N-acetyl-alpha-D-glucosamine site. Acetyl-CoA contacts are provided by residues 359-360 (NY), S378, A396, and R413.

The protein in the N-terminal section; belongs to the N-acetylglucosamine-1-phosphate uridyltransferase family. It in the C-terminal section; belongs to the transferase hexapeptide repeat family. Homotrimer. It depends on Mg(2+) as a cofactor.

The protein localises to the cytoplasm. The enzyme catalyses alpha-D-glucosamine 1-phosphate + acetyl-CoA = N-acetyl-alpha-D-glucosamine 1-phosphate + CoA + H(+). It carries out the reaction N-acetyl-alpha-D-glucosamine 1-phosphate + UTP + H(+) = UDP-N-acetyl-alpha-D-glucosamine + diphosphate. The protein operates within nucleotide-sugar biosynthesis; UDP-N-acetyl-alpha-D-glucosamine biosynthesis; N-acetyl-alpha-D-glucosamine 1-phosphate from alpha-D-glucosamine 6-phosphate (route II): step 2/2. Its pathway is nucleotide-sugar biosynthesis; UDP-N-acetyl-alpha-D-glucosamine biosynthesis; UDP-N-acetyl-alpha-D-glucosamine from N-acetyl-alpha-D-glucosamine 1-phosphate: step 1/1. It participates in bacterial outer membrane biogenesis; LPS lipid A biosynthesis. Its function is as follows. Catalyzes the last two sequential reactions in the de novo biosynthetic pathway for UDP-N-acetylglucosamine (UDP-GlcNAc). The C-terminal domain catalyzes the transfer of acetyl group from acetyl coenzyme A to glucosamine-1-phosphate (GlcN-1-P) to produce N-acetylglucosamine-1-phosphate (GlcNAc-1-P), which is converted into UDP-GlcNAc by the transfer of uridine 5-monophosphate (from uridine 5-triphosphate), a reaction catalyzed by the N-terminal domain. The chain is Bifunctional protein GlmU from Campylobacter jejuni subsp. jejuni serotype O:23/36 (strain 81-176).